Consider the following 527-residue polypeptide: Flavonoid 3',5'-hydroxylase CYP75B138 (527 aa).

The helical transmembrane segment at 6–26 (LDIILFISAIVFLSIYYYNLF) threads the bilayer. C459 contacts heme.

Belongs to the cytochrome P450 family. The cofactor is heme. In terms of tissue distribution, expressed in young cromes.

The protein localises to the membrane. It catalyses the reaction a 3',5'-unsubstituted flavanone + 2 reduced [NADPH--hemoprotein reductase] + 2 O2 = a 3',5'-dihydroxyflavanone + 2 oxidized [NADPH--hemoprotein reductase] + 2 H2O + 2 H(+). It carries out the reaction (2S)-naringenin + 2 reduced [NADPH--hemoprotein reductase] + 2 O2 = (2S)-dihydrotricetin + 2 oxidized [NADPH--hemoprotein reductase] + 2 H2O + 2 H(+). The enzyme catalyses (2R,3R)-dihydrokaempferol + 2 reduced [NADPH--hemoprotein reductase] + 2 O2 = (2R,3R)-dihydromyricetin + 2 oxidized [NADPH--hemoprotein reductase] + 2 H2O + 2 H(+). The catalysed reaction is kaempferol + 2 reduced [NADPH--hemoprotein reductase] + 2 O2 = myricetin + 2 oxidized [NADPH--hemoprotein reductase] + 2 H2O + 2 H(+). It participates in flavonoid metabolism. Functionally, flavonoid 3',5'-hydroxylase that catalyzes the 3'- and 5'-hydroxylation of flavanones, dihydroflavonols and flavonols. Converts narigenin to dihydrotricetin, dihydrokaempferol to dihydromyricetin and kaempferol to myricetin. The polypeptide is Flavonoid 3',5'-hydroxylase CYP75B138 (Crocosmia x crocosmiiflora (Montbretia)).